We begin with the raw amino-acid sequence, 178 residues long: uncharacterized protein (178 aa).

This is an uncharacterized protein from Escherichia coli (strain K12).